The chain runs to 366 residues: Ribosomal RNA small subunit methyltransferase H 1 (366 aa).

The tract at residues 1 to 46 (MADQNINKNEKVLTGQPTENQEPVHKRRERYKGTHPKTFKEKYKER) is disordered. Residues 25–37 (HKRRERYKGTHPK) show a composition bias toward basic residues. Residues 97-99 (GGH), aspartate 117, phenylalanine 147, aspartate 166, and glutamine 173 contribute to the S-adenosyl-L-methionine site.

It belongs to the methyltransferase superfamily. RsmH family.

It localises to the cytoplasm. The enzyme catalyses cytidine(1402) in 16S rRNA + S-adenosyl-L-methionine = N(4)-methylcytidine(1402) in 16S rRNA + S-adenosyl-L-homocysteine + H(+). Specifically methylates the N4 position of cytidine in position 1402 (C1402) of 16S rRNA. The chain is Ribosomal RNA small subunit methyltransferase H 1 from Lachnoclostridium phytofermentans (strain ATCC 700394 / DSM 18823 / ISDg) (Clostridium phytofermentans).